Here is a 332-residue protein sequence, read N- to C-terminus: 2,3-diketo-L-gulonate reductase (332 aa).

The active-site Proton donor is the His44. NAD(+)-binding positions include 168–174 (ITMVDMS), 224–225 (WK), and 304–306 (GHE).

Belongs to the LDH2/MDH2 oxidoreductase family. DlgD subfamily. In terms of assembly, homodimer.

Its subcellular location is the cytoplasm. It carries out the reaction 3-dehydro-L-gulonate + NAD(+) = 2,3-dioxo-L-gulonate + NADH + H(+). The catalysed reaction is 3-dehydro-L-gulonate + NADP(+) = 2,3-dioxo-L-gulonate + NADPH + H(+). In terms of biological role, catalyzes the reduction of 2,3-diketo-L-gulonate in the presence of NADH, to form 3-keto-L-gulonate. This Klebsiella oxytoca protein is 2,3-diketo-L-gulonate reductase.